Reading from the N-terminus, the 631-residue chain is Nucleoside triphosphatase I (631 aa).

Positions 42–204 (FLGLDSMHSL…TMLVNLLRPG (163 aa)) constitute a Helicase ATP-binding domain. Position 55-62 (55-62 (HETGVGKT)) interacts with ATP. Positions 141–144 (DECH) match the DEXH box motif. The region spanning 367–532 (KFIDVCLGIL…EFVQLFRVFK (166 aa)) is the Helicase C-terminal domain. Residues 457–524 (DIFILDMTWN…EIIQSKSKEF (68 aa)) form a binding to the cap-specific mRNA (nucleoside-2'-O-)-methyltransferase region.

Belongs to the helicase family. NPH I subfamily. Monomer. Interacts (via C-terminus) with RAP94/OPG109 (via N-terminus). Interacts with the cap-specific mRNA (nucleoside-2'-O-)-methyltransferase OPG102.

It localises to the virion. It catalyses the reaction a ribonucleoside 5'-triphosphate + H2O = a ribonucleoside 5'-diphosphate + phosphate + H(+). Functionally, DNA-dependent ATPase that acts as a 5' to 3' translocase on single-stranded DNA and thereby plays a role in transcription termination of viral early genes. Uses forward translocation in concert with the viral RNA polymerase RAP94/OPG109 subunit and the capping enzyme/VTF to catalyze release of UUUUUNU-containing nascent RNA from the elongation complex. In addition, acts as a positive elongation factor to assist transcription through problematic sequences. The protein is Nucleoside triphosphatase I (OPG123) of Vaccinia virus (strain Copenhagen) (VACV).